A 130-amino-acid chain; its full sequence is Spore coat protein M (130 aa).

Its function is as follows. Involved in spore outer coat assembly. May be part of a cross-linked insoluble skeleton that surrounds the spore, serves as a matrix for the assembly of additional outer coat material, and confers structural stability to the final structure. The protein is Spore coat protein M (cotM) of Bacillus subtilis (strain 168).